The following is a 350-amino-acid chain: UPF0284 protein MJ1598 (350 aa).

Belongs to the UPF0284 family.

The sequence is that of UPF0284 protein MJ1598 from Methanocaldococcus jannaschii (strain ATCC 43067 / DSM 2661 / JAL-1 / JCM 10045 / NBRC 100440) (Methanococcus jannaschii).